The following is a 504-amino-acid chain: Endochitinase (504 aa).

The first 22 residues, methionine 1–glycine 22, serve as a signal peptide directing secretion. A GH18 domain is found at tyrosine 23–glutamate 392. Cysteines 27 and 52 form a disulfide. Residues threonine 78–glutamate 79 and glycine 105–asparagine 108 each bind chitin. Glutamate 148 functions as the Proton donor in the catalytic mechanism. Residues tyrosine 149, methionine 212–aspartate 215, and tryptophan 362 each bind chitin. Positions leucine 389–glutamate 450 are disordered. The span at proline 396–threonine 408 shows a compositional bias: low complexity. 2 tandem repeats follow at residues glutamate 407–serine 420 and glutamate 421–serine 434. Residues glutamate 407 to glycine 448 form a 3 X 14 AA approximate tandem repeats of E-T-E-A-Y-[ED]-T-D-E-T-E-E-T-S region. The span at glutamate 409 to glutamate 435 shows a compositional bias: acidic residues. The stretch at glutamate 435–glycine 448 is one 3; approximate repeat. The Chitin-binding type-2 domain occupies glycine 448–isoleucine 504. Cysteine 480 and cysteine 493 are joined by a disulfide.

It belongs to the glycosyl hydrolase 18 family. Chitinase class II subfamily. O-glycosylated.

It carries out the reaction Random endo-hydrolysis of N-acetyl-beta-D-glucosaminide (1-&gt;4)-beta-linkages in chitin and chitodextrins.. In terms of biological role, microfilarial chitinase, which may function to degrade chitin-containing structures in the micro-filaria or in its mosquito vector during parasite development and transmission. This is Endochitinase from Brugia malayi (Filarial nematode worm).